The sequence spans 130 residues: RxLR effector protein PITG_14783 (130 aa).

An N-terminal signal peptide occupies residues 1–20 (MRLPYVFAATMATLLVSSNA). The disordered stretch occupies residues 27-58 (AMLSSPNEQHQRQLRSHQTPVEDQEPDEERSL). Positions 38–56 (RQLRSHQTPVEDQEPDEER) match the RxLR-dEER motif.

It belongs to the RxLR effector family.

The protein resides in the secreted. It is found in the host nucleus. Its subcellular location is the host cytoplasm. Functionally, effector that enhances P.infestans colonization of Nicotiana benthamiana leaves. The polypeptide is RxLR effector protein PITG_14783 (Phytophthora infestans (strain T30-4) (Potato late blight agent)).